Consider the following 183-residue polypeptide: Guanylate kinase (183 aa).

The region spanning G4–F182 is the Guanylate kinase-like domain. G11–G18 is an ATP binding site.

Belongs to the guanylate kinase family.

It is found in the cytoplasm. It catalyses the reaction GMP + ATP = GDP + ADP. It carries out the reaction dZMP + ATP = dZDP + ADP. Its pathway is purine metabolism. In terms of biological role, essential for recycling GMP and indirectly, cGMP. Its function is as follows. (Microbial infection) Catalyzes the phosphorylation of dZMP to dZDP, when the bacterium is infected by a phage that produces the substrate for the synthesis of dZTP (2- amino-2'-deoxyadenosine 5'-triphosphate), which is then used by the phage as a DNA polymerase substrate. The protein is Guanylate kinase of Synechococcus sp. (strain ATCC 27144 / PCC 6301 / SAUG 1402/1) (Anacystis nidulans).